The primary structure comprises 128 residues: Saitohin (128 aa).

The disordered stretch occupies residues 77 to 128 (SYSSEESSRNGAEQGRQLSIEGPFQGQNCPSHPAAALPLPMRGESQATSCQV).

In terms of assembly, interacts with PRDX6.

Its subcellular location is the cytoplasm. It localises to the nucleus. The sequence is that of Saitohin (STH) from Gorilla gorilla gorilla (Western lowland gorilla).